A 501-amino-acid polypeptide reads, in one-letter code: Cytochrome P450 2J1 (501 aa).

Residue cysteine 447 coordinates heme.

Belongs to the cytochrome P450 family. Heme serves as cofactor. In terms of tissue distribution, small intestine.

The protein resides in the endoplasmic reticulum membrane. The protein localises to the microsome membrane. The enzyme catalyses an organic molecule + reduced [NADPH--hemoprotein reductase] + O2 = an alcohol + oxidized [NADPH--hemoprotein reductase] + H2O + H(+). In terms of biological role, catalyzes the N-demethylation of benzphetamine to formaldehyde. This chain is Cytochrome P450 2J1 (CYP2J1), found in Oryctolagus cuniculus (Rabbit).